We begin with the raw amino-acid sequence, 557 residues long: Putative sensory transducer protein (557 aa).

Residues 122 to 145 (TASTVMIVVIFVGILIAIALGVFI) traverse the membrane as a helical segment. In terms of domain architecture, HAMP spans 147–199 (RIISKPIGQMVEAADRLALGDVEVDVKAETRDEIGKLAESFKRMIENIREQAY). Positions 243 to 472 (VAAQVAAGAK…ESAAASEELS (230 aa)) constitute a Methyl-accepting transducer domain. Glutamine 268 is subject to Glutamate methyl ester (Gln). Glutamate methyl ester (Glu) is present on glutamate 274. Glutamine 281 carries the post-translational modification Glutamate methyl ester (Gln). Glutamate 463 carries the post-translational modification Glutamate methyl ester (Glu). A compositionally biased stretch (basic and acidic residues) spans 511-541 (DYTENKQPKSYSKEENGEYSDGKETAEKDVG). Residues 511 to 542 (DYTENKQPKSYSKEENGEYSDGKETAEKDVGG) form a disordered region.

This sequence belongs to the methyl-accepting chemotaxis (MCP) protein family.

It localises to the cell membrane. Its function is as follows. May bind attractants or detect changes in the extracellular concentration of soluble sugars. In Acetivibrio thermocellus (strain ATCC 27405 / DSM 1237 / JCM 9322 / NBRC 103400 / NCIMB 10682 / NRRL B-4536 / VPI 7372) (Clostridium thermocellum), this protein is Putative sensory transducer protein.